The following is a 228-amino-acid chain: UPF0758 protein stu1465 (228 aa).

The MPN domain occupies 103–225; it reads QIMSSQQVAR…YYSFREERED (123 aa). Residues histidine 174, histidine 176, and aspartate 187 each coordinate Zn(2+). The short motif at 174–187 is the JAMM motif element; sequence HNHPSGEAYPSRND.

This sequence belongs to the UPF0758 family.

The sequence is that of UPF0758 protein stu1465 from Streptococcus thermophilus (strain ATCC BAA-250 / LMG 18311).